We begin with the raw amino-acid sequence, 92 residues long: Small ribosomal subunit protein bS18 (92 aa).

Belongs to the bacterial ribosomal protein bS18 family. In terms of assembly, part of the 30S ribosomal subunit. Forms a tight heterodimer with protein bS6.

Functionally, binds as a heterodimer with protein bS6 to the central domain of the 16S rRNA, where it helps stabilize the platform of the 30S subunit. This Caulobacter sp. (strain K31) protein is Small ribosomal subunit protein bS18.